We begin with the raw amino-acid sequence, 473 residues long: Photosystem II CP43 reaction center protein (473 aa).

The propeptide occupies 1 to 14 (MKTLYSLRRFYHVE). The residue at position 15 (Thr-15) is an N-acetylthreonine. Thr-15 is modified (phosphothreonine). Transmembrane regions (helical) follow at residues 69–93 (LFEV…PHLA), 134–155 (LLGP…KDRN), 178–200 (KALY…RKIT), 255–275 (KPFA…LSYS), and 291–312 (WFNN…ASQA). Position 367 (Glu-367) interacts with [CaMn4O5] cluster. A helical transmembrane segment spans residues 447–471 (RARAAAAGFEKGIDRDLEPVLFMTP).

This sequence belongs to the PsbB/PsbC family. PsbC subfamily. PSII is composed of 1 copy each of membrane proteins PsbA, PsbB, PsbC, PsbD, PsbE, PsbF, PsbH, PsbI, PsbJ, PsbK, PsbL, PsbM, PsbT, PsbX, PsbY, PsbZ, Psb30/Ycf12, at least 3 peripheral proteins of the oxygen-evolving complex and a large number of cofactors. It forms dimeric complexes. Requires Binds multiple chlorophylls and provides some of the ligands for the Ca-4Mn-5O cluster of the oxygen-evolving complex. It may also provide a ligand for a Cl- that is required for oxygen evolution. PSII binds additional chlorophylls, carotenoids and specific lipids. as cofactor.

It is found in the plastid. It localises to the chloroplast thylakoid membrane. Functionally, one of the components of the core complex of photosystem II (PSII). It binds chlorophyll and helps catalyze the primary light-induced photochemical processes of PSII. PSII is a light-driven water:plastoquinone oxidoreductase, using light energy to abstract electrons from H(2)O, generating O(2) and a proton gradient subsequently used for ATP formation. The sequence is that of Photosystem II CP43 reaction center protein from Carica papaya (Papaya).